The following is a 463-amino-acid chain: Nicotinate phosphoribosyltransferase pncB2 (463 aa).

His-202 carries the post-translational modification Phosphohistidine.

The protein belongs to the NAPRTase family. In terms of processing, transiently phosphorylated on a His residue during the reaction cycle. Phosphorylation strongly increases the affinity for substrates and increases the rate of nicotinate D-ribonucleotide production. Dephosphorylation regenerates the low-affinity form of the enzyme, leading to product release.

It carries out the reaction nicotinate + 5-phospho-alpha-D-ribose 1-diphosphate + ATP + H2O = nicotinate beta-D-ribonucleotide + ADP + phosphate + diphosphate. The protein operates within cofactor biosynthesis; NAD(+) biosynthesis; nicotinate D-ribonucleotide from nicotinate: step 1/1. Functionally, involved in the Preiss-Handler pathway, which is a recycling route that permits the salvage of free nicotinamide (NM) and nicotinic acid (Na) involved in the NAD biosynthesis. Catalyzes the synthesis of beta-nicotinate D-ribonucleotide from nicotinate and 5-phospho-D-ribose 1-phosphate at the expense of ATP. It is not able to use nicotinamide. PncB2 appears to be responsible for the increased salvage synthesis of NAD during infection of host tissues. This Mycobacterium tuberculosis (strain CDC 1551 / Oshkosh) protein is Nicotinate phosphoribosyltransferase pncB2 (pncB2).